The chain runs to 254 residues: Thiazole synthase (254 aa).

Residue Lys-95 is the Schiff-base intermediate with DXP of the active site. Residues Gly-156, 182-183 (AG), and 204-205 (NT) each bind 1-deoxy-D-xylulose 5-phosphate.

The protein belongs to the ThiG family. As to quaternary structure, homotetramer. Forms heterodimers with either ThiH or ThiS.

The protein resides in the cytoplasm. It carries out the reaction [ThiS sulfur-carrier protein]-C-terminal-Gly-aminoethanethioate + 2-iminoacetate + 1-deoxy-D-xylulose 5-phosphate = [ThiS sulfur-carrier protein]-C-terminal Gly-Gly + 2-[(2R,5Z)-2-carboxy-4-methylthiazol-5(2H)-ylidene]ethyl phosphate + 2 H2O + H(+). The protein operates within cofactor biosynthesis; thiamine diphosphate biosynthesis. Its function is as follows. Catalyzes the rearrangement of 1-deoxy-D-xylulose 5-phosphate (DXP) to produce the thiazole phosphate moiety of thiamine. Sulfur is provided by the thiocarboxylate moiety of the carrier protein ThiS. In vitro, sulfur can be provided by H(2)S. The chain is Thiazole synthase from Shewanella piezotolerans (strain WP3 / JCM 13877).